Reading from the N-terminus, the 148-residue chain is Hemoglobin subunit beta-B (148 aa).

Residues 3-148 enclose the Globin domain; it reads DWTDAERAAI…VVSALGRQYH (146 aa). Residues histidine 64 and histidine 93 each contribute to the heme b site.

Belongs to the globin family. In terms of assembly, heterotetramer of two alpha chains and two beta chains. Red blood cells.

Involved in oxygen transport from gills to the various peripheral tissues. The protein is Hemoglobin subunit beta-B (hbb2) of Seriola quinqueradiata (Five-ray yellowtail).